We begin with the raw amino-acid sequence, 479 residues long: UDP-N-acetylmuramate--L-alanine ligase (479 aa).

Residue 126-132 (GTHGKTT) coordinates ATP.

Belongs to the MurCDEF family.

The protein localises to the cytoplasm. The catalysed reaction is UDP-N-acetyl-alpha-D-muramate + L-alanine + ATP = UDP-N-acetyl-alpha-D-muramoyl-L-alanine + ADP + phosphate + H(+). It functions in the pathway cell wall biogenesis; peptidoglycan biosynthesis. In terms of biological role, cell wall formation. This is UDP-N-acetylmuramate--L-alanine ligase from Alkalilimnicola ehrlichii (strain ATCC BAA-1101 / DSM 17681 / MLHE-1).